Reading from the N-terminus, the 264-residue chain is S-adenosylmethionine decarboxylase proenzyme (264 aa).

Residue serine 111 is the Schiff-base intermediate with substrate; via pyruvic acid of the active site. Serine 111 is subject to Pyruvic acid (Ser); by autocatalysis. The Proton acceptor; for processing activity role is filled by histidine 116. The Proton donor; for catalytic activity role is filled by cysteine 139.

This sequence belongs to the prokaryotic AdoMetDC family. Type 2 subfamily. In terms of assembly, heterooctamer of four alpha and four beta chains arranged as a tetramer of alpha/beta heterodimers. Pyruvate serves as cofactor. Is synthesized initially as an inactive proenzyme. Formation of the active enzyme involves a self-maturation process in which the active site pyruvoyl group is generated from an internal serine residue via an autocatalytic post-translational modification. Two non-identical subunits are generated from the proenzyme in this reaction, and the pyruvate is formed at the N-terminus of the alpha chain, which is derived from the carboxyl end of the proenzyme. The post-translation cleavage follows an unusual pathway, termed non-hydrolytic serinolysis, in which the side chain hydroxyl group of the serine supplies its oxygen atom to form the C-terminus of the beta chain, while the remainder of the serine residue undergoes an oxidative deamination to produce ammonia and the pyruvoyl group blocking the N-terminus of the alpha chain.

The enzyme catalyses S-adenosyl-L-methionine + H(+) = S-adenosyl 3-(methylsulfanyl)propylamine + CO2. The protein operates within amine and polyamine biosynthesis; S-adenosylmethioninamine biosynthesis; S-adenosylmethioninamine from S-adenosyl-L-methionine: step 1/1. In terms of biological role, catalyzes the decarboxylation of S-adenosylmethionine to S-adenosylmethioninamine (dcAdoMet), the propylamine donor required for the synthesis of the polyamines spermine and spermidine from the diamine putrescine. The sequence is that of S-adenosylmethionine decarboxylase proenzyme from Geobacillus thermodenitrificans (strain NG80-2).